The chain runs to 514 residues: 2,3-bisphosphoglycerate-independent phosphoglycerate mutase (514 aa).

Residues Asp-14 and Ser-64 each contribute to the Mn(2+) site. The active-site Phosphoserine intermediate is Ser-64. Substrate-binding positions include His-125, 155 to 156 (RD), Arg-187, Arg-193, 263 to 266 (RADR), and Lys-336. Positions 403, 407, 444, 445, and 463 each coordinate Mn(2+).

Belongs to the BPG-independent phosphoglycerate mutase family. As to quaternary structure, monomer. It depends on Mn(2+) as a cofactor.

The enzyme catalyses (2R)-2-phosphoglycerate = (2R)-3-phosphoglycerate. Its pathway is carbohydrate degradation; glycolysis; pyruvate from D-glyceraldehyde 3-phosphate: step 3/5. Its function is as follows. Catalyzes the interconversion of 2-phosphoglycerate and 3-phosphoglycerate. This chain is 2,3-bisphosphoglycerate-independent phosphoglycerate mutase, found in Shewanella sp. (strain ANA-3).